The sequence spans 607 residues: Serum albumin (607 aa).

The N-terminal stretch at 1-16 (MKWTILTALLIISAES) is a signal peptide. Residues 17 to 20 (KNLY) constitute a propeptide that is removed on maturation. 3 consecutive Albumin domains span residues 19–209 (LYKR…TQLK), 210–401 (KALH…HVLA), and 403–600 (AIKE…ILIE). Residue histidine 27 participates in Cu cation binding. 17 disulfides stabilise this stretch: cysteine 77–cysteine 86, cysteine 99–cysteine 115, cysteine 114–cysteine 125, cysteine 147–cysteine 192, cysteine 191–cysteine 200, cysteine 223–cysteine 269, cysteine 268–cysteine 276, cysteine 288–cysteine 302, cysteine 301–cysteine 312, cysteine 339–cysteine 384, cysteine 383–cysteine 392, cysteine 415–cysteine 461, cysteine 460–cysteine 471, cysteine 484–cysteine 500, cysteine 499–cysteine 510, cysteine 537–cysteine 582, and cysteine 581–cysteine 590. Residues histidine 270 and aspartate 272 each coordinate Zn(2+). The Ca(2+) site is built by aspartate 272 and glutamate 275.

The protein belongs to the ALB/AFP/VDB family. Plasma. In the skin, widely distributed around the membranes of epithelial layer cells and within the stratum spongiosum of the dermis (at protein level).

Its subcellular location is the secreted. Functionally, serum albumin, the main protein of plasma, has a good binding capacity for water, Ca(2+), Na(+), K(+), fatty acids, hormones, bilirubin and drugs. Its main function is the regulation of the colloidal osmotic pressure of blood. Potent inhibitor of trypsin but has no inhibitory effect on thrombin, chymotrypsin, elastase and subtilisin. In Bombina maxima (Giant fire-bellied toad), this protein is Serum albumin.